A 988-amino-acid chain; its full sequence is Bifunctional glutamine synthetase adenylyltransferase/adenylyl-removing enzyme (988 aa).

The interval methionine 1 to proline 474 is adenylyl removase. The tract at residues leucine 480–glutamate 988 is adenylyl transferase.

The protein belongs to the GlnE family. Mg(2+) is required as a cofactor.

It catalyses the reaction [glutamine synthetase]-O(4)-(5'-adenylyl)-L-tyrosine + phosphate = [glutamine synthetase]-L-tyrosine + ADP. The catalysed reaction is [glutamine synthetase]-L-tyrosine + ATP = [glutamine synthetase]-O(4)-(5'-adenylyl)-L-tyrosine + diphosphate. Its function is as follows. Involved in the regulation of glutamine synthetase GlnA, a key enzyme in the process to assimilate ammonia. When cellular nitrogen levels are high, the C-terminal adenylyl transferase (AT) inactivates GlnA by covalent transfer of an adenylyl group from ATP to specific tyrosine residue of GlnA, thus reducing its activity. Conversely, when nitrogen levels are low, the N-terminal adenylyl removase (AR) activates GlnA by removing the adenylyl group by phosphorolysis, increasing its activity. The regulatory region of GlnE binds the signal transduction protein PII (GlnB) which indicates the nitrogen status of the cell. In Rhodopseudomonas palustris (strain HaA2), this protein is Bifunctional glutamine synthetase adenylyltransferase/adenylyl-removing enzyme.